The following is a 423-amino-acid chain: Histidine--tRNA ligase (423 aa).

Belongs to the class-II aminoacyl-tRNA synthetase family. As to quaternary structure, homodimer.

The protein resides in the cytoplasm. The enzyme catalyses tRNA(His) + L-histidine + ATP = L-histidyl-tRNA(His) + AMP + diphosphate + H(+). In Haemophilus influenzae (strain ATCC 51907 / DSM 11121 / KW20 / Rd), this protein is Histidine--tRNA ligase (hisS).